The primary structure comprises 357 residues: Alanine racemase (357 aa).

The active-site Proton acceptor; specific for D-alanine is Lys-33. Lys-33 carries the post-translational modification N6-(pyridoxal phosphate)lysine. Arg-129 is a binding site for substrate. The active-site Proton acceptor; specific for L-alanine is the Tyr-253. Substrate is bound at residue Met-301.

Belongs to the alanine racemase family. The cofactor is pyridoxal 5'-phosphate.

It catalyses the reaction L-alanine = D-alanine. It participates in amino-acid biosynthesis; D-alanine biosynthesis; D-alanine from L-alanine: step 1/1. Catalyzes the interconversion of L-alanine and D-alanine. May also act on other amino acids. This Pseudomonas entomophila (strain L48) protein is Alanine racemase (alr).